A 305-amino-acid chain; its full sequence is Taste receptor type 2 member 13 (305 aa).

Residues 1–7 lie on the Extracellular side of the membrane; sequence MGSNVYG. A helical membrane pass occupies residues 8–28; it reads ILTMVMIAEFVFGNMSNGFIV. Over 29–43 the chain is Cytoplasmic; that stretch reads LINCIDWVRKGTLSS. Residues 44 to 64 form a helical membrane-spanning segment; it reads IGWILLFLAISRMVLIWEMLI. At 65-88 the chain is on the extracellular side; the sequence is TWIKYMKYSFSFVTGTELRGIMFT. The helical transmembrane segment at 89–109 threads the bilayer; it reads WVISNHFSLWLATILSIFYLL. Topologically, residues 110–128 are cytoplasmic; that stretch reads KIASFSKPVFLYLKWREKK. A helical membrane pass occupies residues 129–149; that stretch reads VLLIVLLGNLIFLMLNILQIN. The Extracellular segment spans residues 150–182; sequence KHIEHWMYQYERNITWSSRVSDFAGFSNLVLLE. Residue Asn162 is glycosylated (N-linked (GlcNAc...) asparagine). Residues 183 to 203 form a helical membrane-spanning segment; that stretch reads MIVFSVTPFTVALVSFILLIF. Residues 204-232 are Cytoplasmic-facing; sequence SLWKHLQKMHLNSRGERDPSTKAHVNALR. The helical transmembrane segment at 233 to 253 threads the bilayer; it reads IMVSFLLLYATYFISFFLSLI. The Extracellular portion of the chain corresponds to 254 to 262; the sequence is PMAHKTRLG. The helical transmembrane segment at 263 to 283 threads the bilayer; that stretch reads LMFSITVGLFYPSSHSFILIL. The Cytoplasmic segment spans residues 284–305; it reads GHSNLRQASLWVMTYLKCGQKH.

Belongs to the G-protein coupled receptor T2R family.

It is found in the cell membrane. Its function is as follows. Receptor that may play a role in the perception of bitterness and is gustducin-linked. May play a role in sensing the chemical composition of the gastrointestinal content. The activity of this receptor may stimulate alpha gustducin, mediate PLC-beta-2 activation and lead to the gating of TRPM5. The sequence is that of Taste receptor type 2 member 13 from Mus musculus (Mouse).